The following is a 116-amino-acid chain: Large ribosomal subunit protein bL19 (116 aa).

This sequence belongs to the bacterial ribosomal protein bL19 family.

Its function is as follows. This protein is located at the 30S-50S ribosomal subunit interface and may play a role in the structure and function of the aminoacyl-tRNA binding site. The polypeptide is Large ribosomal subunit protein bL19 (Mycoplasmopsis agalactiae (strain NCTC 10123 / CIP 59.7 / PG2) (Mycoplasma agalactiae)).